Here is a 484-residue protein sequence, read N- to C-terminus: Threonine synthase-like 2 (484 aa).

Lys113 carries the N6-(pyridoxal phosphate)lysine modification.

This sequence belongs to the threonine synthase family. The cofactor is pyridoxal 5'-phosphate.

Functionally, acts as a catabolic phospho-lyase on both gamma- and beta-phosphorylated substrates. Degrades O-phospho-threonine (PThr) to alpha-ketobutyrate, ammonia and phosphate. The sequence is that of Threonine synthase-like 2 (THNSL2) from Pongo abelii (Sumatran orangutan).